The sequence spans 140 residues: 3-hydroxyacyl-[acyl-carrier-protein] dehydratase FabZ (140 aa).

Histidine 47 is a catalytic residue.

This sequence belongs to the thioester dehydratase family. FabZ subfamily.

Its subcellular location is the cytoplasm. It catalyses the reaction a (3R)-hydroxyacyl-[ACP] = a (2E)-enoyl-[ACP] + H2O. In terms of biological role, involved in unsaturated fatty acids biosynthesis. Catalyzes the dehydration of short chain beta-hydroxyacyl-ACPs and long chain saturated and unsaturated beta-hydroxyacyl-ACPs. This is 3-hydroxyacyl-[acyl-carrier-protein] dehydratase FabZ from Streptococcus pneumoniae serotype 2 (strain D39 / NCTC 7466).